A 337-amino-acid polypeptide reads, in one-letter code: Methylthioribose-1-phosphate isomerase (337 aa).

Substrate-binding positions include 51 to 53, R88, and Q187; that span reads RGA. D228 serves as the catalytic Proton donor. 238–239 contributes to the substrate binding site; sequence NK.

This sequence belongs to the eIF-2B alpha/beta/delta subunits family. MtnA subfamily.

The catalysed reaction is 5-(methylsulfanyl)-alpha-D-ribose 1-phosphate = 5-(methylsulfanyl)-D-ribulose 1-phosphate. The protein operates within amino-acid biosynthesis; L-methionine biosynthesis via salvage pathway; L-methionine from S-methyl-5-thio-alpha-D-ribose 1-phosphate: step 1/6. Catalyzes the interconversion of methylthioribose-1-phosphate (MTR-1-P) into methylthioribulose-1-phosphate (MTRu-1-P). The chain is Methylthioribose-1-phosphate isomerase from Anaeromyxobacter sp. (strain Fw109-5).